The primary structure comprises 45 residues: MDKEIHQFGKGHVLHQMLRILELEVIQIMPKVMTNKKKPTLHIGV.

In terms of tissue distribution, not detected in seedlings, leaves, embryos or root and shoot meristems.

The chain is Putative purine permease 9 from Arabidopsis thaliana (Mouse-ear cress).